Reading from the N-terminus, the 123-residue chain is DNA-directed RNA polymerase I subunit RPA12 (123 aa).

C17, C20, C35, C38, C84, and C87 together coordinate Zn(2+). Residues C17 to C38 form a C4-type zinc finger. The TFIIS-type zinc-finger motif lies at V80 to K120. The Hairpin motif lies at D103–E104. Zn(2+) contacts are provided by C112 and C115.

The protein belongs to the archaeal RpoM/eukaryotic RPA12/RPB9/RPC11 RNA polymerase family. In terms of assembly, component of the RNA polymerase I (Pol I) complex consisting of at least 13 subunits.

Its subcellular location is the nucleus. The protein localises to the nucleolus. Its function is as follows. Core component of RNA polymerase I (Pol I), a DNA-dependent RNA polymerase which synthesizes ribosomal RNA precursors using the four ribonucleoside triphosphates as substrates. Can mediate Pol I proofreading of the nascent RNA transcript. Anchors into the Pol I active site to monitor transcription fidelity and cleave mis-incorporated 5'-ribonucleotides. In Bos taurus (Bovine), this protein is DNA-directed RNA polymerase I subunit RPA12.